The sequence spans 836 residues: DNA gyrase subunit A (836 aa).

The Topo IIA-type catalytic domain occupies 46 to 510; that stretch reads LPDARDGLKP…ISEEIDDESL (465 aa). The active-site O-(5'-phospho-DNA)-tyrosine intermediate is tyrosine 134. The short motif at 537–543 is the GyrA-box element; it reads QHRGGVG.

It belongs to the type II topoisomerase GyrA/ParC subunit family. Heterotetramer, composed of two GyrA and two GyrB chains. In the heterotetramer, GyrA contains the active site tyrosine that forms a transient covalent intermediate with DNA, while GyrB binds cofactors and catalyzes ATP hydrolysis.

It localises to the cytoplasm. It carries out the reaction ATP-dependent breakage, passage and rejoining of double-stranded DNA.. A type II topoisomerase that negatively supercoils closed circular double-stranded (ds) DNA in an ATP-dependent manner to modulate DNA topology and maintain chromosomes in an underwound state. Negative supercoiling favors strand separation, and DNA replication, transcription, recombination and repair, all of which involve strand separation. Also able to catalyze the interconversion of other topological isomers of dsDNA rings, including catenanes and knotted rings. Type II topoisomerases break and join 2 DNA strands simultaneously in an ATP-dependent manner. This chain is DNA gyrase subunit A, found in Mycoplasma genitalium (strain ATCC 33530 / DSM 19775 / NCTC 10195 / G37) (Mycoplasmoides genitalium).